Here is a 661-residue protein sequence, read N- to C-terminus: Pentatricopeptide repeat-containing protein At5g66631 (661 aa).

9 PPR repeats span residues 139–173 (VHFS…GEEK), 176–210 (CTES…GGIP), 211–245 (NSRT…RITR), 246–280 (TLKH…GKFP), 410–444 (DAYT…GIKL), 445–475 (PFST…DRTL), 484–518 (LMLL…GVSP), 519–553 (DIQT…GLEP), and 554–588 (DPYM…NLMP).

The protein belongs to the PPR family. P subfamily.

In Arabidopsis thaliana (Mouse-ear cress), this protein is Pentatricopeptide repeat-containing protein At5g66631.